We begin with the raw amino-acid sequence, 215 residues long: 3-isopropylmalate dehydratase small subunit (215 aa).

Belongs to the LeuD family. LeuD type 1 subfamily. Heterodimer of LeuC and LeuD.

The enzyme catalyses (2R,3S)-3-isopropylmalate = (2S)-2-isopropylmalate. It participates in amino-acid biosynthesis; L-leucine biosynthesis; L-leucine from 3-methyl-2-oxobutanoate: step 2/4. Functionally, catalyzes the isomerization between 2-isopropylmalate and 3-isopropylmalate, via the formation of 2-isopropylmaleate. In Saccharophagus degradans (strain 2-40 / ATCC 43961 / DSM 17024), this protein is 3-isopropylmalate dehydratase small subunit.